A 1839-amino-acid polypeptide reads, in one-letter code: MDFNVKDFGALGDGASDDTAAIQAAIDAAHAAGGGTVYLPAGEYRVSGGEEPSDGALTIKSNVYIVGAGMGETVIKMVDGWTQNVTGMVRSAYGEETSNFGMSDLTLDGNRDNLSAKVDGWFNGYIPGQDGADRDVTLERVEIREMSGYGFDPHEQTINLTIRDSVAHDNGLDGFVADYQVGGVFENNVSYNNDRHGFNIVTSTNDFVLSNNVAYGNGGAGLVVQRGSYDLPHPYDILIDGGAYYDNALEGVQLKMTHDVTLQNAEIYGNGLYGVRVYGAQDVQLLDNQIHDNSQNGAYAEVLLQSYDDTAGVSGNFYVTTGTWLEGNVISGSANSTFGIQERADGTDYSSLYANTIDGVQNGTVRLYGANSTVSEQPSSGQQATLEGTAGNDVLSGTGAHELILGLAGNDRLDGGAGDDTLDGGAGRDTLTGGAGADTFRFSAREDSHRTDSASFTDLITDFDASQDRIDLSALGFTGLGNGYDGTLAVTTGSGGTRTYLKSYEVDAQGRRFEIALDGNFVGQFNDGNLLFDAAPVTGTEGNDNLSGTDAGETLLGYGGNDTLNGGAGNDILVGGAGRDTLTGGAGADVFRFEALSDSQRNYTAGDNQGDYIIDFAVGEDRIDVSALGYTGLGNGRNGTLAVVLNSAGDRTYVKSYDTDANGYNFELSLAGNYQGLLGAEQFVFATPPEQATIEGTDGNDSLQGTGADELLLGLGGRDSLNGGAGDDVLDGGAERDTLTGGTGADTFLFSARTDSYRTDSASFTDLITDFDPAQDRIDLSGLGFSGFGNGYDGTLLLQVNAAGTRTYLKSLEADADGQRFEIALDGDFSGQLDSGNVIFEAGVFNAKDFGALGDGASDDRPAIQAAIDAAYAAGGGTVYLPAGEYRVSPTGDPGDGCLMLKDGVYLVGAGMGETVIKLIDGSDQKITGMVRSAYGEETSNFGMSDLTLDGNRDNTSGKVDGWFNGYIPGQDGADRNVTLERVEIREMSGYGFDPHEQTINLTIRDSVAHDNGLDGFVADYLVDSVFENNVAYNNDRHGFNVVTSTYDFTLSNNVAYGNGGAGLVIQRGAEDLAQPTDILIDGGAYYDNALEGVLLKMTNNITLQNAEIYGNGYSGVRLYGTEDVQILNNQIHDNAQNVAYAEVLLQSFNDVGVSGNFYATTGTWIEGNVISGSANSTYGIEERNDGTDYSSLYANTIDGVQTGAVRLNGAHSIVSDQPGTGQQATLEGTTGNDTLGGSDAHETLLGLDGDDRLDGGAGNDILDGGVGRDTLTGGAGADTFRFSAREDSYRTASTSFTDLITDFDPAQDRIDLSALGFTGLGDGYDGTLLVTTGSGGSRTYLKSLEADAEGRRFEIALDGDFVGLLDASNLIFERPAIEGDAGDNALLGTSVAETLLGHAGNDTLDGAGGDDILVGGAGSDSLTGGAGADVFRFDALSDSQRNYDTGDNQGDRITDFAVGEDKLDVSALGFTGLGDGYNGTLVLVLNSAGDRTYVKSYENGADGYRFEFSLDGNYQGLLGNEDFIFATPSGQQLLEGTAGNDSLQGTAADEVIHGGSGRDTLAGGAGADVFRFSELTDSYRTDSASYADLITDFDASEDRIDLSGLGFSGLGNGYGGTLALQVNSAGTRTYLKSYEANAAGERFELSLDGDLSGLDESHLVFDERVVLAGGDGNDTLSGGSAAEELLGGAGNDSLSGGAGNDILDGGAGRDTLSGGSGSDIFRFGDALDSFRNYNSGANVTDSIADFTHGADLIDLSALGYTGLGDGYNGTLAIVLNDAGTKTYLKDRGGDAEGNRFEIALEGNHADQLDASDFIFATAAAATGIEVVGSTPAEEQPVV.

PbH1 repeat units lie at residues 133–155 (DRDV…DPHE), 157–179 (TINL…VADY), 180–202 (QVGG…NIVT), 204–226 (TNDF…VVQR), 257–279 (THDV…RVYG), 280–302 (AQDV…YAEV), 320–342 (TTGT…GIQE), and 347–369 (TDYS…RLYG). Positions 372-386 (STVSEQPSSGQQATL) are enriched in polar residues. Residues 372 to 392 (STVSEQPSSGQQATLEGTAGN) form a disordered region. Hemolysin-type calcium-binding repeat units follow at residues 387–399 (EGTA…SGTG), 406–422 (GLAG…DDTL), 424–440 (GGAG…ADTF), 538–550 (TGTE…SGTD), 557–573 (GYGG…NDIL), 574–591 (VGGA…ADVF), 695–709 (EGTD…TGAD), 714–730 (GLGG…DDVL), and 732–748 (GGAE…ADTF). PbH1 repeat units follow at residues 975 to 997 (DRNV…DPHE), 999 to 1021 (TINL…VADY), 1022 to 1044 (LVDS…NVVT), 1046 to 1068 (TYDF…VIQR), 1099 to 1121 (TNNI…RLYG), 1122 to 1143 (TEDV…AYAE), 1161 to 1183 (TTGT…GIEE), and 1188 to 1210 (TDYS…RLNG). The segment covering 1215–1236 (VSDQPGTGQQATLEGTTGNDTL) has biased composition (polar residues). The interval 1215-1238 (VSDQPGTGQQATLEGTTGNDTLGG) is disordered. Hemolysin-type calcium-binding repeat units follow at residues 1229–1243 (GTTG…DAHE), 1247–1263 (GLDG…NDIL), 1265–1281 (GGVG…ADTF), 1398–1414 (GHAG…DDIL), 1415–1432 (VGGA…ADVF), 1536–1552 (EGTA…ADEV), 1554–1571 (HGGS…ADVF), 1670–1681 (GGDGNDTLSGGS), 1688–1704 (GGAG…NDIL), and 1706–1722 (GGAG…SDIF).

The protein belongs to the D-mannuronate C5-epimerase family. The cofactor is Ca(2+).

Its subcellular location is the secreted. It catalyses the reaction [(1-&gt;4)-beta-D-mannuronosyl](n) = [alginate](n). It functions in the pathway glycan biosynthesis; alginate biosynthesis. With respect to regulation, inhibited by zinc. In terms of biological role, converts beta-D-mannuronic acid (M) to alpha-L-guluronic acid (G), producing a polymer with gel-forming capacity, required for the formation of the cyst coat. In Azotobacter vinelandii, this protein is Mannuronan C5-epimerase AlgE3.